The sequence spans 393 residues: MNVPTTRKDLMIVNMGPQHPSMHGVLRLIVTLDGEDVIDCEPILGYLHRGMEKIAENRTIIQYLPYVTRWDYLATMFTEAITVNGPEQLGNIQVPKRASYIRVIMLELSRIASHLLWLGPFMADIGAQTPFFYIFRERELIYDLFEAATGMRMMHNFFRIGGVSADLPYGWIDKCFDFCNYFLTRVIEYQKLITRNPIFLERVEGVGIIGREEVINWGLSGPMLRASGIQWDLRKVDNYECYEEFDWEVQWQKEGDSLARYLVRIGEMMESIKIIQQALEGIPGGPYENLEIRSFDREKEPEWNDFEYRFIGKKSSPTFELPKQELYVRVEAPKGELGIFLIGDQNGFPWRWKIRPPGFINLQILPQLVKRMKLADIMTILGSIDIIMGEIDR.

Belongs to the complex I 49 kDa subunit family. In terms of assembly, NDH is composed of at least 16 different subunits, 5 of which are encoded in the nucleus.

It is found in the plastid. Its subcellular location is the chloroplast thylakoid membrane. The enzyme catalyses a plastoquinone + NADH + (n+1) H(+)(in) = a plastoquinol + NAD(+) + n H(+)(out). It catalyses the reaction a plastoquinone + NADPH + (n+1) H(+)(in) = a plastoquinol + NADP(+) + n H(+)(out). NDH shuttles electrons from NAD(P)H:plastoquinone, via FMN and iron-sulfur (Fe-S) centers, to quinones in the photosynthetic chain and possibly in a chloroplast respiratory chain. The immediate electron acceptor for the enzyme in this species is believed to be plastoquinone. Couples the redox reaction to proton translocation, and thus conserves the redox energy in a proton gradient. The sequence is that of NAD(P)H-quinone oxidoreductase subunit H, chloroplastic from Cicer arietinum (Chickpea).